We begin with the raw amino-acid sequence, 304 residues long: Transcription factor bHLH94 (304 aa).

The segment at 86–107 is disordered; that stretch reads VESHPPPQHRRKRRRTRNCKNK. Positions 92-104 are enriched in basic residues; the sequence is PQHRRKRRRTRNC. The region spanning 112–163 is the bHLH domain; sequence NQRMTHIAVERNRRKQMNEYLAVLRSLMPSSYAQRGDQASIVGGAINYVKEL.

In terms of assembly, homodimer. Expressed constitutively in roots, leaves, stems, and flowers.

The protein resides in the nucleus. In Arabidopsis thaliana (Mouse-ear cress), this protein is Transcription factor bHLH94 (BHLH94).